Here is a 91-residue protein sequence, read N- to C-terminus: DNA-directed RNA polymerase subunit omega (91 aa).

It belongs to the RNA polymerase subunit omega family. As to quaternary structure, the RNAP catalytic core consists of 2 alpha, 1 beta, 1 beta' and 1 omega subunit. When a sigma factor is associated with the core the holoenzyme is formed, which can initiate transcription.

The catalysed reaction is RNA(n) + a ribonucleoside 5'-triphosphate = RNA(n+1) + diphosphate. Functionally, promotes RNA polymerase assembly. Latches the N- and C-terminal regions of the beta' subunit thereby facilitating its interaction with the beta and alpha subunits. This chain is DNA-directed RNA polymerase subunit omega, found in Shigella flexneri.